The primary structure comprises 249 residues: Probable transcriptional regulatory protein mll3945 (249 aa).

Belongs to the TACO1 family.

It is found in the cytoplasm. The chain is Probable transcriptional regulatory protein mll3945 from Mesorhizobium japonicum (strain LMG 29417 / CECT 9101 / MAFF 303099) (Mesorhizobium loti (strain MAFF 303099)).